Here is a 266-residue protein sequence, read N- to C-terminus: Secreted RxLR effector protein 128 (266 aa).

A signal peptide spans 1–18 (MRGAFYTAIALLIGRSQT). The RxLR-dEER motif lies at 48-63 (RYLRDGLAHSATNEER).

Belongs to the RxLR effector family.

The protein resides in the secreted. Its subcellular location is the host nucleus. In terms of biological role, secreted effector that dos not suppress the host cell death induced by cell death-inducing proteins. This chain is Secreted RxLR effector protein 128, found in Plasmopara viticola (Downy mildew of grapevine).